A 223-amino-acid polypeptide reads, in one-letter code: Ribosome assembly factor mrt4 (223 aa).

The protein belongs to the universal ribosomal protein uL10 family. As to quaternary structure, associates with the pre-60S ribosomal particle.

It localises to the nucleus. The protein resides in the nucleolus. It is found in the cytoplasm. In terms of biological role, component of the ribosome assembly machinery. Nuclear paralog of the ribosomal protein P0, it binds pre-60S subunits at an early stage of assembly in the nucleolus, and is replaced by P0 in cytoplasmic pre-60S subunits and mature 80S ribosomes. The protein is Ribosome assembly factor mrt4 of Dictyostelium discoideum (Social amoeba).